We begin with the raw amino-acid sequence, 61 residues long: Alpha-conotoxin-like Sm1.1 (61 aa).

The N-terminal stretch at 1–16 is a signal peptide; that stretch reads MFTVFLLVVLATTVVS. A propeptide spanning residues 17 to 43 is cleaved from the precursor; that stretch reads FPSDRASDGRDDEAKDERSDMHESGRK. Residues 19 to 46 form a disordered region; it reads SDRASDGRDDEAKDERSDMHESGRKGRG. The segment covering 21 to 42 has biased composition (basic and acidic residues); that stretch reads RASDGRDDEAKDERSDMHESGR. 2 disulfide bridges follow: cysteine 48/cysteine 53 and cysteine 49/cysteine 59. Proline 55 carries the post-translational modification 4-hydroxyproline; partial. Cysteine 59 is subject to Cysteine amide.

The protein belongs to the conotoxin A superfamily. As to expression, expressed by the venom duct.

The protein localises to the secreted. Alpha-conotoxins act on postsynaptic membranes, they bind to the nicotinic acetylcholine receptors (nAChR) and thus inhibit them. The sequence is that of Alpha-conotoxin-like Sm1.1 from Conus stercusmuscarum (Fly-specked cone).